Here is a 175-residue protein sequence, read N- to C-terminus: Hypoxanthine-guanine phosphoribosyltransferase (175 aa).

Positions 40 and 41 each coordinate diphosphate. The Mg(2+) site is built by E96 and D97. Catalysis depends on D100, which acts as the Proton acceptor. GMP-binding positions include K128, F149 to L150, and D156. Residue R162 participates in diphosphate binding.

The protein belongs to the purine/pyrimidine phosphoribosyltransferase family. Mg(2+) serves as cofactor.

It localises to the cytoplasm. It catalyses the reaction IMP + diphosphate = hypoxanthine + 5-phospho-alpha-D-ribose 1-diphosphate. It carries out the reaction GMP + diphosphate = guanine + 5-phospho-alpha-D-ribose 1-diphosphate. The protein operates within purine metabolism; IMP biosynthesis via salvage pathway; IMP from hypoxanthine: step 1/1. Its pathway is purine metabolism; GMP biosynthesis via salvage pathway; GMP from guanine: step 1/1. Its function is as follows. Purine salvage pathway enzyme that catalyzes the transfer of the ribosyl-5-phosphate group from 5-phospho-alpha-D-ribose 1-diphosphate (PRPP) to the N9 position of the 6-oxopurines hypoxanthine and guanine to form the corresponding ribonucleotides IMP (inosine 5'-monophosphate) and GMP (guanosine 5'-monophosphate), with the release of PPi. This Mycoplasma genitalium (strain ATCC 33530 / DSM 19775 / NCTC 10195 / G37) (Mycoplasmoides genitalium) protein is Hypoxanthine-guanine phosphoribosyltransferase (hpt).